Reading from the N-terminus, the 95-residue chain is Co-chaperonin GroES (95 aa).

This sequence belongs to the GroES chaperonin family. As to quaternary structure, heptamer of 7 subunits arranged in a ring. Interacts with the chaperonin GroEL.

The protein localises to the cytoplasm. Together with the chaperonin GroEL, plays an essential role in assisting protein folding. The GroEL-GroES system forms a nano-cage that allows encapsulation of the non-native substrate proteins and provides a physical environment optimized to promote and accelerate protein folding. GroES binds to the apical surface of the GroEL ring, thereby capping the opening of the GroEL channel. The sequence is that of Co-chaperonin GroES from Xanthomonas axonopodis pv. citri (strain 306).